A 285-amino-acid polypeptide reads, in one-letter code: uncharacterized protein (285 aa).

The tract at residues 1-25 (MANQKKKTLPPQHQNQQPGFEYLMD) is disordered. Residue 45–69 (IITGGDSGIGRAVSVLFAKEGANVV) participates in NADP(+) binding. Residue Ser177 participates in substrate binding. Tyr190 serves as the catalytic Proton acceptor.

It belongs to the short-chain dehydrogenases/reductases (SDR) family.

This is an uncharacterized protein from Bacillus subtilis (strain 168).